We begin with the raw amino-acid sequence, 351 residues long: Tetraacyldisaccharide 4'-kinase (351 aa).

61-68 (TAGGTGKT) provides a ligand contact to ATP.

This sequence belongs to the LpxK family.

It catalyses the reaction a lipid A disaccharide + ATP = a lipid IVA + ADP + H(+). It participates in glycolipid biosynthesis; lipid IV(A) biosynthesis; lipid IV(A) from (3R)-3-hydroxytetradecanoyl-[acyl-carrier-protein] and UDP-N-acetyl-alpha-D-glucosamine: step 6/6. Functionally, transfers the gamma-phosphate of ATP to the 4'-position of a tetraacyldisaccharide 1-phosphate intermediate (termed DS-1-P) to form tetraacyldisaccharide 1,4'-bis-phosphate (lipid IVA). The sequence is that of Tetraacyldisaccharide 4'-kinase from Xanthomonas campestris pv. campestris (strain 8004).